A 1273-amino-acid polypeptide reads, in one-letter code: ABC transporter B family member 2 (1273 aa).

A signal peptide spans 1–30 (MYISLIFFLSNHFPPLISIPIFIFLSFSSP). 7 helical membrane passes run 66–86 (FSFA…GACI), 91–111 (VPIF…AYLF), 126–146 (FVYL…CWMH), 209–229 (FIAG…VTLS), 230–250 (IVPL…GLIA), 305–325 (GLGL…LVWF), and 345–365 (LNVV…SAFV). An ABC transmembrane type-1 1 domain is found at 77–366 (MTLGSVGACI…AAPDISAFVR (290 aa)). The ABC transporter 1 domain maps to 401-637 (IQFKDATFSY…PDGAYSSLLR (237 aa)). Position 436 to 443 (436 to 443 (GGSGSGKS)) interacts with ATP. N-linked (GlcNAc...) asparagine glycosylation is found at N466 and N651. Residues 710–997 (GVCGTICAFI…TLALAPDLLK (288 aa)) enclose the ABC transmembrane type-1 2 domain. 2 consecutive transmembrane segments (helical) span residues 711 to 731 (VCGT…ALGV) and 752 to 772 (IAIL…IEHI). N-linked (GlcNAc...) asparagine glycosylation is present at N806. 3 helical membrane-spanning segments follow: residues 832–852 (ILLQ…ILNW), 934–954 (IAGL…GLAL), and 975–995 (FMVL…APDL). Residues 1030–1266 (IELKGVHFSY…KSGPYFKLIS (237 aa)) form the ABC transporter 2 domain. An ATP-binding site is contributed by 1065 to 1072 (GQSGSGKS). N-linked (GlcNAc...) asparagine glycosylation is found at N1217 and N1256.

It belongs to the ABC transporter superfamily. ABCB family. Multidrug resistance exporter (TC 3.A.1.201) subfamily. In terms of assembly, interacts with 1-naphthylphthalamic acid (NPA).

It is found in the membrane. This is ABC transporter B family member 2 (ABCB2) from Arabidopsis thaliana (Mouse-ear cress).